Consider the following 51-residue polypeptide: MPSQKSFRTKQKLAKAQKQNRPLPQWIRLRSGNTIRYNAKRRHWRRTKLNI.

The disordered stretch occupies residues 1-22; that stretch reads MPSQKSFRTKQKLAKAQKQNRP.

The protein belongs to the eukaryotic ribosomal protein eL39 family. In terms of assembly, interacts with YIH1.

In Debaryomyces hansenii (strain ATCC 36239 / CBS 767 / BCRC 21394 / JCM 1990 / NBRC 0083 / IGC 2968) (Yeast), this protein is Large ribosomal subunit protein eL39 (RPL39).